The sequence spans 896 residues: Translation initiation factor IF-2 (896 aa).

Disordered regions lie at residues 53–81 (HGGE…SASK) and 117–301 (AEEA…ESMD). The span at 60-79 (TKMTLQRKSVSTLSVGSGSA) shows a compositional bias: polar residues. Over residues 117–227 (AEEAASKAKA…ESEKTGDHHV (111 aa)) the composition is skewed to basic and acidic residues. A compositionally biased stretch (low complexity) spans 254 to 266 (ATPAPAAAPANTG). Positions 273-282 (GKDNRRDSRN) are enriched in basic and acidic residues. A compositionally biased stretch (low complexity) spans 283–294 (ARGGRNARNNRS). The region spanning 394 to 563 (SRAPVVTIMG…LLEAEVLELK (170 aa)) is the tr-type G domain. The G1 stretch occupies residues 403–410 (GHVDHGKT). 403 to 410 (GHVDHGKT) contacts GTP. The segment at 428-432 (GITQH) is G2. The segment at 449–452 (DTPG) is G3. GTP is bound by residues 449 to 453 (DTPGH) and 503 to 506 (NKID). Residues 503-506 (NKID) form a G4 region. Residues 539 to 541 (SAK) form a G5 region.

Belongs to the TRAFAC class translation factor GTPase superfamily. Classic translation factor GTPase family. IF-2 subfamily.

It is found in the cytoplasm. One of the essential components for the initiation of protein synthesis. Protects formylmethionyl-tRNA from spontaneous hydrolysis and promotes its binding to the 30S ribosomal subunits. Also involved in the hydrolysis of GTP during the formation of the 70S ribosomal complex. This is Translation initiation factor IF-2 from Shewanella sediminis (strain HAW-EB3).